A 286-amino-acid chain; its full sequence is Polyamine aminopropyltransferase (286 aa).

Positions 5 to 238 constitute a PABS domain; sequence TMWHETLHDQ…GIMTFAWATN (234 aa). Gln-33 is a binding site for S-methyl-5'-thioadenosine. Spermidine contacts are provided by His-64 and Asp-88. Residues Glu-108 and 140-141 contribute to the S-methyl-5'-thioadenosine site; that span reads DG. Catalysis depends on Asp-158, which acts as the Proton acceptor. 158–161 is a spermidine binding site; it reads DCTD. Pro-165 lines the S-methyl-5'-thioadenosine pocket.

This sequence belongs to the spermidine/spermine synthase family. In terms of assembly, homodimer or homotetramer.

The protein localises to the cytoplasm. It catalyses the reaction S-adenosyl 3-(methylsulfanyl)propylamine + putrescine = S-methyl-5'-thioadenosine + spermidine + H(+). It functions in the pathway amine and polyamine biosynthesis; spermidine biosynthesis; spermidine from putrescine: step 1/1. Functionally, catalyzes the irreversible transfer of a propylamine group from the amino donor S-adenosylmethioninamine (decarboxy-AdoMet) to putrescine (1,4-diaminobutane) to yield spermidine. In Salmonella paratyphi B (strain ATCC BAA-1250 / SPB7), this protein is Polyamine aminopropyltransferase.